The chain runs to 693 residues: tRNA (guanine(37)-N(1))-methyltransferase (693 aa).

S-adenosyl-L-methionine-binding positions include Arg327, 365–366 (DI), and 392–393 (DA). The segment at 497–572 (AGDSHQSNSH…QKAEDAPTNE (76 aa)) is disordered. The span at 500 to 512 (SHQSNSHQSNPHE) shows a compositional bias: low complexity. Asn591 provides a ligand contact to S-adenosyl-L-methionine.

The protein belongs to the class I-like SAM-binding methyltransferase superfamily. TRM5/TYW2 family. In terms of assembly, monomer.

The protein localises to the mitochondrion matrix. It is found in the nucleus. The protein resides in the cytoplasm. It catalyses the reaction guanosine(37) in tRNA + S-adenosyl-L-methionine = N(1)-methylguanosine(37) in tRNA + S-adenosyl-L-homocysteine + H(+). Specifically methylates the N1 position of guanosine-37 in various cytoplasmic and mitochondrial tRNAs. Methylation is not dependent on the nature of the nucleoside 5' of the target nucleoside. This is the first step in the biosynthesis of wybutosine (yW), a modified base adjacent to the anticodon of tRNAs and required for accurate decoding. This is tRNA (guanine(37)-N(1))-methyltransferase from Plasmodium vivax (strain Salvador I).